The sequence spans 370 residues: Actin-related protein 2/3 complex subunit 1A (370 aa).

WD repeat units follow at residues 6-45 (FLLE…WVKA), 50-89 (EHNG…WKPT), 140-179 (PIRS…VDEK), 202-241 (GTGG…QVST), 244-284 (TEFL…TFVS), and 322-365 (LHQN…SSIQ).

Belongs to the WD repeat ARPC1 family. Probable component of the Arp2/3 complex in which it may replace ARPC1B.

Its subcellular location is the cytoplasm. It localises to the cytoskeleton. The protein resides in the nucleus. Functionally, probably functions as a component of the Arp2/3 complex which is involved in regulation of actin polymerization and together with an activating nucleation-promoting factor (NPF) mediates the formation of branched actin networks. In addition to its role in the cytoplasmic cytoskeleton, the Arp2/3 complex also promotes actin polymerization in the nucleus, thereby regulating gene transcription and repair of damaged DNA. This Bos taurus (Bovine) protein is Actin-related protein 2/3 complex subunit 1A (ARPC1A).